A 321-amino-acid chain; its full sequence is uncharacterized protein (321 aa).

Residues 1–56 form the HTH lacI-type domain; the sequence is MANIKDIAEKAGVSVTTVSRVINNHPYVSEDKRKRVFEAMESLEYTRNIHAVHLSK. The H-T-H motif DNA-binding region spans 4-23; it reads IKDIAEKAGVSVTTVSRVIN.

This is an uncharacterized protein from Bacillus subtilis (strain 168).